Here is a 325-residue protein sequence, read N- to C-terminus: Chain length determinant protein (325 aa).

Residues 1–31 (MRVENNNVSGQNHDPEQIDLIDLLVQLWRGK) lie on the Cytoplasmic side of the membrane. A helical transmembrane segment spans residues 32–52 (MTIIISVIVAIALAIGYLAVA). Residues 53 to 294 (KEKWTSTAII…LPIRRDSPKK (242 aa)) are Periplasmic-facing. Residues 295 to 315 (AITLILAVLLGGMVGAGIVLG) traverse the membrane as a helical segment. The Cytoplasmic segment spans residues 316–325 (RNALRNYNAK).

Belongs to the WzzB/Cld/Rol family.

The protein resides in the cell inner membrane. It participates in bacterial outer membrane biogenesis; lipopolysaccharide biosynthesis. In terms of biological role, confers a modal distribution of chain length on the O-antigen component of lipopolysaccharide (LPS). Gives rise to a reduced number of short chain molecules and increases in numbers of longer molecules. This is Chain length determinant protein (wzzB) from Shigella flexneri.